Reading from the N-terminus, the 257-residue chain is MSAIRYGDNVFITLPRLSTPMIFNGLVPHYTKPNQYEYVPILSSGSIANGDSYIIEPININNSNTALNPQSVFRLKQVSQNKYLYDNNGIVYLGNDTDNKANWSLKPVNLNATTIDYNQEFRLVNQGTGNNAVFSTINNVTMITSKYNDTTNNSIFKFLKGPFTYAQSQCCQGNILYTRPNMCGIYKQGSSVCHTIPSSQSNYPSYTTSMVGSTQSTTPVGSNPPTHRSIDKWYIIGGIFWVIVLIILVIFIIWKLK.

Asn61, Asn95, Asn102, Asn111, Asn139, Asn148, and Asn152 each carry an N-linked (GlcNAc...) asparagine; by host glycan. The helical transmembrane segment at 233–253 threads the bilayer; the sequence is WYIIGGIFWVIVLIILVIFII.

It localises to the host membrane. It is found in the virion. This is an uncharacterized protein from Acanthamoeba polyphaga (Amoeba).